Consider the following 94-residue polypeptide: Acylphosphatase (94 aa).

The Acylphosphatase-like domain maps to 8–94; sequence RLTAWVHGRV…REQITGFHER (87 aa). Catalysis depends on residues Arg23 and Asn41.

This sequence belongs to the acylphosphatase family.

The catalysed reaction is an acyl phosphate + H2O = a carboxylate + phosphate + H(+). In Mycobacterium sp. (strain JLS), this protein is Acylphosphatase (acyP).